Consider the following 505-residue polypeptide: Circadian clock protein KaiC3 (505 aa).

2 KaiC domains span residues 10 to 252 (EKLE…KSSD) and 253 to 485 (IRIT…LAGT). Ser-423 carries the phosphoserine; by autocatalysis modification. Thr-424 is modified (phosphothreonine; by autocatalysis).

Belongs to the KaiC family. In terms of assembly, multimerizes, probably forming homohexamers, no interaction with KaiC1 or KaiC2 is seen. In another study forms hexamers, interacts with KaiB1, KaiB3, and KaiC1. Post-translationally, autophosphorylates and dephosphorylates. Dephosphorylation of KaiC3 was higher at 25 than at 30 or 35 degrees Celsius.

It carries out the reaction L-seryl-[protein] + ATP = O-phospho-L-seryl-[protein] + ADP + H(+). The catalysed reaction is L-threonyl-[protein] + ATP = O-phospho-L-threonyl-[protein] + ADP + H(+). The enzyme catalyses ATP + H2O = ADP + phosphate + H(+). ATPase activity is influenced by KaiB1 and KaiB3 in vitro; ATPase is reduced 35% by the KaiB1 tetramer and 55% by the KaiB3 monomer but not affected by KaiA or the KaiB3 tetramer. In terms of biological role, seems to be linked to dark adaption of Synechocystis cells, but is not as essential as the core oscillator KaiAB1C1 for the circadian cycle. KaiB3 and KaiC3 may cross talk with the core oscillator. Autophosphorylates and dephosphorylates independently of KaiA. Has a weak ATPase, hydrolyzes 8.5 ATP/monomer/day, has no detectable ATP synthesis activity. ATPase activity reduced 55% by KaiB3 monomer but not the KaiB3 tetramer or KaiA in vitro, reduced 35% by KaiB1 tetramer. In Synechocystis sp. (strain ATCC 27184 / PCC 6803 / Kazusa), this protein is Circadian clock protein KaiC3.